The sequence spans 197 residues: Protein GrpE (197 aa).

A compositionally biased stretch (basic and acidic residues) spans 1 to 27; sequence MTKQEKAENQEKPTEETVEETPKKETP. The segment at 1–50 is disordered; that stretch reads MTKQEKAENQEKPTEETVEETPKKETPFEPVMEADEVEETTEAQAPVEEA. Over residues 32–41 the composition is skewed to acidic residues; sequence MEADEVEETT.

This sequence belongs to the GrpE family. As to quaternary structure, homodimer.

Its subcellular location is the cytoplasm. Its function is as follows. Participates actively in the response to hyperosmotic and heat shock by preventing the aggregation of stress-denatured proteins, in association with DnaK and GrpE. It is the nucleotide exchange factor for DnaK and may function as a thermosensor. Unfolded proteins bind initially to DnaJ; upon interaction with the DnaJ-bound protein, DnaK hydrolyzes its bound ATP, resulting in the formation of a stable complex. GrpE releases ADP from DnaK; ATP binding to DnaK triggers the release of the substrate protein, thus completing the reaction cycle. Several rounds of ATP-dependent interactions between DnaJ, DnaK and GrpE are required for fully efficient folding. The chain is Protein GrpE from Latilactobacillus sakei (Lactobacillus sakei).